The primary structure comprises 330 residues: Beta-hexosaminidase (330 aa).

Residues aspartate 62, arginine 70, arginine 133, and 163–164 each bind substrate; that span reads KH. Residue histidine 176 is the Proton donor/acceptor of the active site. The active-site Nucleophile is the aspartate 246.

It belongs to the glycosyl hydrolase 3 family. NagZ subfamily.

It localises to the cytoplasm. The enzyme catalyses Hydrolysis of terminal non-reducing N-acetyl-D-hexosamine residues in N-acetyl-beta-D-hexosaminides.. Its pathway is cell wall biogenesis; peptidoglycan recycling. Its function is as follows. Plays a role in peptidoglycan recycling by cleaving the terminal beta-1,4-linked N-acetylglucosamine (GlcNAc) from peptide-linked peptidoglycan fragments, giving rise to free GlcNAc, anhydro-N-acetylmuramic acid and anhydro-N-acetylmuramic acid-linked peptides. This Idiomarina loihiensis (strain ATCC BAA-735 / DSM 15497 / L2-TR) protein is Beta-hexosaminidase.